The primary structure comprises 350 residues: Membrane progestin receptor alpha (350 aa).

At 1-80 (MATMVAQKLS…HNEAVNVWTH (80 aa)) the chain is on the cytoplasmic side. A helical transmembrane segment spans residues 81–101 (LLAALVLLLRLAIFVGTVDFW). The Extracellular segment spans residues 102–105 (GDPH). A helical transmembrane segment spans residues 106–126 (ALPLFIIVLASFTYLSLSALA). The Cytoplasmic portion of the chain corresponds to 127–139 (HLLQAKSEFWHYS). Residues 140–160 (FFFLDYVGVAVYQFGSALAHF) form a helical membrane-spanning segment. Topologically, residues 161–165 (YYAIE) are extracellular. A helical membrane pass occupies residues 166–186 (PAWHAQVQTIFLPMAAFLAWL). Residues 187–239 (SCTGSCYNKYIQKPGLLGRTCQEVPSALAYALDISPVAHRILASPEPATDDPA) are Cytoplasmic-facing. Residues 240–260 (LLYHKCQVVFFLLAAAFFSAF) form a helical membrane-spanning segment. Topologically, residues 261–278 (MPERWFPGSCHIFGQGHQ) are extracellular. Residues 279–299 (LFHVFLVLCTLAQLEAVALDY) traverse the membrane as a helical segment. Topologically, residues 300 to 318 (EARRPIYEPLHTRWPHNFS) are cytoplasmic. A helical transmembrane segment spans residues 319–339 (GLFLLTVGSSILTAFLLSQLV). Residues 340-350 (RRKLDLDRKTQ) are Extracellular-facing.

This sequence belongs to the ADIPOR family.

It localises to the cell membrane. Its function is as follows. Plasma membrane progesterone (P4) receptor coupled to G proteins. Seems to act through a G(i) mediated pathway. May be involved in oocyte maturation. Involved in neurosteroid inhibition of apoptosis. Also binds dehydroepiandrosterone (DHEA), pregnanolone, pregnenolone and allopregnanolone. The protein is Membrane progestin receptor alpha (PAQR7) of Sus scrofa (Pig).